Here is a 372-residue protein sequence, read N- to C-terminus: Chaperone protein DnaJ (372 aa).

Residues 5-69 enclose the J domain; that stretch reads DYYEVLGLTK…QKKARYDQFG (65 aa). The CR-type zinc finger occupies 129–211; that stretch reads GKETEIEIPK…CRGEGKVQKR (83 aa). Zn(2+) contacts are provided by Cys142, Cys145, Cys159, Cys162, Cys185, Cys188, Cys199, and Cys202. CXXCXGXG motif repeat units lie at residues 142–149, 159–166, 185–192, and 199–206; these read CETCHGSG, CSTCNGAG, CTTCHGTG, and CSTCRGEG.

Belongs to the DnaJ family. Homodimer. Requires Zn(2+) as cofactor.

The protein resides in the cytoplasm. Participates actively in the response to hyperosmotic and heat shock by preventing the aggregation of stress-denatured proteins and by disaggregating proteins, also in an autonomous, DnaK-independent fashion. Unfolded proteins bind initially to DnaJ; upon interaction with the DnaJ-bound protein, DnaK hydrolyzes its bound ATP, resulting in the formation of a stable complex. GrpE releases ADP from DnaK; ATP binding to DnaK triggers the release of the substrate protein, thus completing the reaction cycle. Several rounds of ATP-dependent interactions between DnaJ, DnaK and GrpE are required for fully efficient folding. Also involved, together with DnaK and GrpE, in the DNA replication of plasmids through activation of initiation proteins. The protein is Chaperone protein DnaJ of Lysinibacillus sphaericus (strain C3-41).